Here is a 153-residue protein sequence, read N- to C-terminus: Ribosome maturation factor RimP (153 aa).

The protein belongs to the RimP family.

It localises to the cytoplasm. Required for maturation of 30S ribosomal subunits. This is Ribosome maturation factor RimP from Marinobacter nauticus (strain ATCC 700491 / DSM 11845 / VT8) (Marinobacter aquaeolei).